The following is a 335-amino-acid chain: Holliday junction branch migration complex subunit RuvB (335 aa).

Residues 4 to 184 (ADRLIQPTAL…FGIVQRLEFY (181 aa)) are large ATPase domain (RuvB-L). ATP contacts are provided by residues I23, R24, G65, K68, T69, T70, 131–133 (EDY), R174, Y184, and R221. T69 contributes to the Mg(2+) binding site. The small ATPAse domain (RuvB-S) stretch occupies residues 185-255 (NIKDLTQIVK…VASAALDMLD (71 aa)). Residues 258 to 335 (KEGFDYMDRK…LHFGYDYEPN (78 aa)) are head domain (RuvB-H). R294, R313, and R318 together coordinate DNA.

This sequence belongs to the RuvB family. Homohexamer. Forms an RuvA(8)-RuvB(12)-Holliday junction (HJ) complex. HJ DNA is sandwiched between 2 RuvA tetramers; dsDNA enters through RuvA and exits via RuvB. An RuvB hexamer assembles on each DNA strand where it exits the tetramer. Each RuvB hexamer is contacted by two RuvA subunits (via domain III) on 2 adjacent RuvB subunits; this complex drives branch migration. In the full resolvosome a probable DNA-RuvA(4)-RuvB(12)-RuvC(2) complex forms which resolves the HJ.

The protein resides in the cytoplasm. It catalyses the reaction ATP + H2O = ADP + phosphate + H(+). Its function is as follows. The RuvA-RuvB-RuvC complex processes Holliday junction (HJ) DNA during genetic recombination and DNA repair, while the RuvA-RuvB complex plays an important role in the rescue of blocked DNA replication forks via replication fork reversal (RFR). RuvA specifically binds to HJ cruciform DNA, conferring on it an open structure. The RuvB hexamer acts as an ATP-dependent pump, pulling dsDNA into and through the RuvAB complex. RuvB forms 2 homohexamers on either side of HJ DNA bound by 1 or 2 RuvA tetramers; 4 subunits per hexamer contact DNA at a time. Coordinated motions by a converter formed by DNA-disengaged RuvB subunits stimulates ATP hydrolysis and nucleotide exchange. Immobilization of the converter enables RuvB to convert the ATP-contained energy into a lever motion, pulling 2 nucleotides of DNA out of the RuvA tetramer per ATP hydrolyzed, thus driving DNA branch migration. The RuvB motors rotate together with the DNA substrate, which together with the progressing nucleotide cycle form the mechanistic basis for DNA recombination by continuous HJ branch migration. Branch migration allows RuvC to scan DNA until it finds its consensus sequence, where it cleaves and resolves cruciform DNA. The protein is Holliday junction branch migration complex subunit RuvB of Pseudoalteromonas atlantica (strain T6c / ATCC BAA-1087).